A 166-amino-acid chain; its full sequence is DNA replication protein 17 (166 aa).

The protein belongs to the phi29likevirus protein p56 family. Homodimer. Interacts with the histone-like protein p6; this interaction optimizes the binding of protein p6 at the viral DNA ends, thus favoring the initiation of replication.

Its function is as follows. Involved in the replication of viral DNA. It is required at the very beginning of the virus amplification, conditions in which a low number of viral DNA molecules enter the host cell, possibly to recruit the limiting amount of initiation factors at the replication origins. Once the infection process is established and the other replication proteins reach optimal concentration, it becomes dispensable. Optimizes the binding of protein p6 at the viral DNA ends, thus favoring the initiation of replication. The sequence is that of DNA replication protein 17 (17) from Bacillus subtilis (Bacteriophage phi-29).